Here is a 535-residue protein sequence, read N- to C-terminus: Glucans biosynthesis protein D 1 (535 aa).

The tat-type signal signal peptide spans 1 to 28 (MHRRDLLKQLAAGFLALAPGLTPSTASA). The insert stretch occupies residues 275 to 287 (RTDRAGDRQSAAR).

This sequence belongs to the OpgD/OpgG family. Post-translationally, predicted to be exported by the Tat system. The position of the signal peptide cleavage has not been experimentally proven.

It localises to the periplasm. The protein operates within glycan metabolism; osmoregulated periplasmic glucan (OPG) biosynthesis. Functionally, probably involved in the control of the structural glucose backbone of osmoregulated periplasmic glucans (OPGs). This chain is Glucans biosynthesis protein D 1 (opgD1), found in Ralstonia nicotianae (strain ATCC BAA-1114 / GMI1000) (Ralstonia solanacearum).